Reading from the N-terminus, the 266-residue chain is Large ribosomal subunit protein eL8 (266 aa).

Residues Lys-11, Lys-20, and Lys-21 each participate in a glycyl lysine isopeptide (Lys-Gly) (interchain with G-Cter in SUMO2) cross-link. Position 34 is an N6-acetyllysine (Lys-34). Lys-48 is covalently cross-linked (Glycyl lysine isopeptide (Lys-Gly) (interchain with G-Cter in SUMO2)). At Lys-97 the chain carries N6-acetyllysine; alternate. Residue Lys-97 forms a Glycyl lysine isopeptide (Lys-Gly) (interchain with G-Cter in SUMO2); alternate linkage. Lys-125 participates in a covalent cross-link: Glycyl lysine isopeptide (Lys-Gly) (interchain with G-Cter in SUMO2). At Lys-217 the chain carries N6-acetyllysine. A Glycyl lysine isopeptide (Lys-Gly) (interchain with G-Cter in SUMO2) cross-link involves residue Lys-245.

The protein belongs to the eukaryotic ribosomal protein eL8 family. As to quaternary structure, component of the large ribosomal subunit. Interacts with CRY1. Interacts with DICER1, AGO2, TARBP2, MOV10 and EIF6; they form a large RNA-induced silencing complex (RISC).

The protein localises to the cytoplasm. Component of the large ribosomal subunit. The ribosome is a large ribonucleoprotein complex responsible for the synthesis of proteins in the cell. The polypeptide is Large ribosomal subunit protein eL8 (RPL7A) (Bos taurus (Bovine)).